Here is a 568-residue protein sequence, read N- to C-terminus: CRISPR-associated exonuclease Cas4/endonuclease Cas1 fusion (568 aa).

Positions 1–209 (MSVVVTRYRG…KCSLAPVCLP (209 aa)) are CRISPR-associated exonuclease Cas4. C43 provides a ligand contact to [4Fe-4S] cluster. Mn(2+)-binding residues include D95 and E108. [4Fe-4S] cluster is bound by residues C198, C201, and C207. Positions 232 to 568 (VLHVATPGTR…PGLFATFRLR (337 aa)) are CRISPR-associated endonuclease Cas1. Positions 390, 459, and 474 each coordinate Mn(2+).

This sequence in the N-terminal section; belongs to the CRISPR-associated exonuclease Cas4 family. The protein in the C-terminal section; belongs to the CRISPR-associated endonuclease Cas1 family. In terms of assembly, homodimer, forms a heterotetramer with a Cas2 homodimer. The cofactor is [4Fe-4S] cluster. It depends on Mg(2+) as a cofactor. Requires Mn(2+) as cofactor.

The enzyme catalyses exonucleolytic cleavage in the 5'- to 3'-direction to yield nucleoside 3'-phosphates.. CRISPR (clustered regularly interspaced short palindromic repeat), is an adaptive immune system that provides protection against mobile genetic elements (viruses, transposable elements and conjugative plasmids). CRISPR clusters contain spacers, sequences complementary to antecedent mobile elements, and target invading nucleic acids. CRISPR clusters are transcribed and processed into CRISPR RNA (crRNA). The Cas4 region acts as a ssDNA exonuclease, while the Cas1 region acts as a dsDNA endonuclease. Involved in the integration of spacer DNA into the CRISPR cassette. The protein is CRISPR-associated exonuclease Cas4/endonuclease Cas1 fusion (cas4-cas1) of Myxococcus xanthus (strain DK1622).